We begin with the raw amino-acid sequence, 664 residues long: tRNA uridine 5-carboxymethylaminomethyl modification enzyme MnmG (664 aa).

Residues glycine 14–glycine 19, valine 126, and serine 183 contribute to the FAD site. Glycine 277 to phenylalanine 291 lines the NAD(+) pocket. Glutamine 374 provides a ligand contact to FAD.

It belongs to the MnmG family. As to quaternary structure, homodimer. Heterotetramer of two MnmE and two MnmG subunits. FAD is required as a cofactor.

It is found in the cytoplasm. Functionally, NAD-binding protein involved in the addition of a carboxymethylaminomethyl (cmnm) group at the wobble position (U34) of certain tRNAs, forming tRNA-cmnm(5)s(2)U34. This is tRNA uridine 5-carboxymethylaminomethyl modification enzyme MnmG from Salinibacter ruber (strain DSM 13855 / M31).